A 249-amino-acid polypeptide reads, in one-letter code: 2,3-bisphosphoglycerate-dependent phosphoglycerate mutase (249 aa).

Substrate-binding positions include Arg-9–Asn-16, Thr-22–Gly-23, Arg-61, Glu-88–Tyr-91, Lys-99, Arg-115–Arg-116, and Gly-184–Asn-185. His-10 functions as the Tele-phosphohistidine intermediate in the catalytic mechanism. Glu-88 functions as the Proton donor/acceptor in the catalytic mechanism.

It belongs to the phosphoglycerate mutase family. BPG-dependent PGAM subfamily. Homodimer.

It catalyses the reaction (2R)-2-phosphoglycerate = (2R)-3-phosphoglycerate. It functions in the pathway carbohydrate degradation; glycolysis; pyruvate from D-glyceraldehyde 3-phosphate: step 3/5. Catalyzes the interconversion of 2-phosphoglycerate and 3-phosphoglycerate. This Stenotrophomonas maltophilia (strain K279a) protein is 2,3-bisphosphoglycerate-dependent phosphoglycerate mutase.